Reading from the N-terminus, the 375-residue chain is Putative F-box protein At5g52620 (375 aa).

One can recognise an F-box domain in the interval 5-52 (GKSDPIPIDIILDILSRLSTNSIAKFGLASKFCGSILRGQDFIELFLI).

In Arabidopsis thaliana (Mouse-ear cress), this protein is Putative F-box protein At5g52620.